The following is a 67-amino-acid chain: Guanine nucleotide-binding protein G(I)/G(S)/G(O) subunit gamma-13 (67 aa).

Residue cysteine 64 is modified to Cysteine methyl ester. Cysteine 64 carries S-farnesyl cysteine lipidation. Positions 65–67 (TIL) are cleaved as a propeptide — removed in mature form.

It belongs to the G protein gamma family. In terms of assembly, g proteins are composed of 3 units, alpha, beta and gamma.

Its subcellular location is the cell membrane. Its function is as follows. Guanine nucleotide-binding proteins (G proteins) are involved as a modulator or transducer in various transmembrane signaling systems. The beta and gamma chains are required for the GTPase activity, for replacement of GDP by GTP, and for G protein-effector interaction. The protein is Guanine nucleotide-binding protein G(I)/G(S)/G(O) subunit gamma-13 (Gng13) of Mus musculus (Mouse).